The primary structure comprises 146 residues: VEWSSSERSTITSLWGKVIPAEIGPVAFARVLIVYPWTQRYFGNFGDLSNIAAISGNAKVAAHGKVVLDGVDKAVKNLDNIKGAYTSLSLLHSEKLNVDPDNFKLLGDCLTIVLATKFGAEFTPKVQAVWQKFLIVLIHALSRQYF.

The Globin domain maps to 2 to 146 (EWSSSERSTI…LIHALSRQYF (145 aa)). Residues His-63 and His-92 each contribute to the heme b site.

Belongs to the globin family. As to quaternary structure, heterotetramer of two alpha chains and two beta chains. As to expression, red blood cells.

Functionally, involved in oxygen transport from gills to the various peripheral tissues. The protein is Hemoglobin cathodic subunit beta of Gymnothorax unicolor (Brown moray).